A 168-amino-acid polypeptide reads, in one-letter code: 3-dehydroquinate dehydratase (168 aa).

The active-site Proton acceptor is the tyrosine 22. 3 residues coordinate substrate: asparagine 76, histidine 82, and aspartate 89. Catalysis depends on histidine 102, which acts as the Proton donor. Residues 103-104 (LT) and arginine 113 each bind substrate.

This sequence belongs to the type-II 3-dehydroquinase family. As to quaternary structure, homododecamer.

It carries out the reaction 3-dehydroquinate = 3-dehydroshikimate + H2O. Its pathway is metabolic intermediate biosynthesis; chorismate biosynthesis; chorismate from D-erythrose 4-phosphate and phosphoenolpyruvate: step 3/7. Its function is as follows. Catalyzes a trans-dehydration via an enolate intermediate. The sequence is that of 3-dehydroquinate dehydratase from Helicobacter acinonychis (strain Sheeba).